Here is a 746-residue protein sequence, read N- to C-terminus: NAD(P)H-quinone oxidoreductase subunit 5, chloroplastic (746 aa).

Transmembrane regions (helical) follow at residues 9-29, 39-59, 89-109, 125-145, 147-167, 185-205, 222-242, 261-281, 283-303, 330-350, 357-377, 399-419, 428-448, 545-565, 608-628, and 726-746; these read WIIPFLTLAVPILIGLGLLLV, IWAFPSVLLLSIVMVFSTNLS, IDSLTSIMSILIATVGMMVLI, FAYMSFFNTSMLGLVISPNLI, IYIFWELVGMCSYLSIGFWFT, GDFGLLLGILGLYWIAGSFEF, NVLNSSFAILCASLLFLGAVA, TPISALIHAATMVAAGIFLVA, LLPLLTVIPYIMNLISLIGVI, LGYIMLASGIGSYRAALFHSI, ALLFLGSGSIIHSMEPILGYS, ATFLLGTLSLCGIPPLACFWS, WLYSPIFAIIASSTTGLTAFY, TMLFPLLLLAILTLFVGSVGI, IYSVSIAFFGILIANLLYGSV, and LFFSLSSLSIALILVYFYLYF.

This sequence belongs to the complex I subunit 5 family. NDH is composed of at least 16 different subunits, 5 of which are encoded in the nucleus.

The protein resides in the plastid. The protein localises to the chloroplast thylakoid membrane. The catalysed reaction is a plastoquinone + NADH + (n+1) H(+)(in) = a plastoquinol + NAD(+) + n H(+)(out). It catalyses the reaction a plastoquinone + NADPH + (n+1) H(+)(in) = a plastoquinol + NADP(+) + n H(+)(out). In terms of biological role, NDH shuttles electrons from NAD(P)H:plastoquinone, via FMN and iron-sulfur (Fe-S) centers, to quinones in the photosynthetic chain and possibly in a chloroplast respiratory chain. The immediate electron acceptor for the enzyme in this species is believed to be plastoquinone. Couples the redox reaction to proton translocation, and thus conserves the redox energy in a proton gradient. The sequence is that of NAD(P)H-quinone oxidoreductase subunit 5, chloroplastic (ndhF) from Amborella trichopoda.